A 694-amino-acid chain; its full sequence is Elongation factor G (694 aa).

The region spanning 6–288 (KLYRNIGIAA…GVIEYLPSPT (283 aa)) is the tr-type G domain. GTP is bound by residues 15–22 (AHVDAGKT), 86–90 (DTPGH), and 140–143 (NKMD).

Belongs to the TRAFAC class translation factor GTPase superfamily. Classic translation factor GTPase family. EF-G/EF-2 subfamily.

It localises to the cytoplasm. In terms of biological role, catalyzes the GTP-dependent ribosomal translocation step during translation elongation. During this step, the ribosome changes from the pre-translocational (PRE) to the post-translocational (POST) state as the newly formed A-site-bound peptidyl-tRNA and P-site-bound deacylated tRNA move to the P and E sites, respectively. Catalyzes the coordinated movement of the two tRNA molecules, the mRNA and conformational changes in the ribosome. The chain is Elongation factor G from Legionella pneumophila (strain Paris).